The sequence spans 1356 residues: Serine/threonine-protein kinase PSK1 (1356 aa).

S10 carries the phosphoserine modification. Residues 20-115 (KHAITHKGTS…SVDSTVSSPL (96 aa)) form a disordered region. Composition is skewed to polar residues over residues 26-37 (KGTSSSVASLQT) and 54-64 (YDTSLSDVSTP). The span at 99 to 115 (LPSTASSSVDSTVSSPL) shows a compositional bias: low complexity. Phosphoserine occurs at positions 192, 202, 255, 286, and 327. The PAS 1 domain occupies 450–518 (RTFTSTKNSA…VLHKLLSTEG (69 aa)). Low complexity predominate over residues 592–608 (PTLSSSSTLSLPKMASS). Disordered stretches follow at residues 592 to 612 (PTLS…PTGS) and 627 to 660 (YTKP…PVRS). Positions 738–807 (LKLKIHSLPY…FINDKYPALD (70 aa)) constitute a PAS 2 domain. At S926 the chain carries Phosphoserine. The segment at 948–972 (DSRAHSQSTLSEQEQVPLENDKDSG) is disordered. The span at 952–961 (HSQSTLSEQE) shows a compositional bias: polar residues. Phosphoserine occurs at positions 1018, 1023, 1035, and 1055. The segment covering 1021–1032 (TESLADSKSSGK) has biased composition (polar residues). Residues 1021 to 1066 (TESLADSKSSGKGLSPLEEEKLIDENATENGLAGSPKDEDGIIMTN) are disordered. T1079 is subject to Phosphothreonine. Residues 1096 to 1354 (FVSLQKMGEG…IDDINNDKWL (259 aa)) form the Protein kinase domain. ATP-binding positions include 1102 to 1110 (MGEGAYGKV) and K1125. The active-site Proton acceptor is the D1230.

This sequence belongs to the protein kinase superfamily. Ser/Thr protein kinase family.

The protein resides in the cytoplasm. It catalyses the reaction L-seryl-[protein] + ATP = O-phospho-L-seryl-[protein] + ADP + H(+). The enzyme catalyses L-threonyl-[protein] + ATP = O-phospho-L-threonyl-[protein] + ADP + H(+). Its function is as follows. Serine/threonine-protein kinase involved in the control of sugar metabolism and translation. Phosphorylates UGP1, which is required for normal glycogen and beta-(1,6)-glucan synthesis. This phosphorylation shifts glucose partitioning toward cell wall glucan synthesis at the expense of glycogen synthesis. This Saccharomyces cerevisiae (strain ATCC 204508 / S288c) (Baker's yeast) protein is Serine/threonine-protein kinase PSK1 (PSK1).